The following is a 291-amino-acid chain: MGGDNTLNDFRHIPRKRFGQHWLKDQGVLDQIVKAAELNPEDCVLEVGPGKGALTEKLIESQAKFIQAIELDRDLVIGLKKRFNHQNKFSLREGDILSAPLDAENGVTINKVVANIPYNITGPLLKRLIGELRKAPENSFETLVLLMQKEVAQRLLARPGNSNFSALSVRVQLLAKCQDVCDVPSKCFQPAPKVDSKVVMIKPFASIDPDFYEVGNLLEKLLKHAFAGRRKKLRNTIGSFVTSNDQIKEFFAYRGISLDQRPQEISPSNWFGLAKALKETCVIENGTFQSK.

Residues His-21, Leu-23, Gly-48, Glu-70, Asp-95, and Asn-115 each coordinate S-adenosyl-L-methionine.

It belongs to the class I-like SAM-binding methyltransferase superfamily. rRNA adenine N(6)-methyltransferase family. RsmA subfamily.

It is found in the cytoplasm. The catalysed reaction is adenosine(1518)/adenosine(1519) in 16S rRNA + 4 S-adenosyl-L-methionine = N(6)-dimethyladenosine(1518)/N(6)-dimethyladenosine(1519) in 16S rRNA + 4 S-adenosyl-L-homocysteine + 4 H(+). Its function is as follows. Specifically dimethylates two adjacent adenosines (A1518 and A1519) in the loop of a conserved hairpin near the 3'-end of 16S rRNA in the 30S particle. May play a critical role in biogenesis of 30S subunits. The polypeptide is Ribosomal RNA small subunit methyltransferase A (Prochlorococcus marinus (strain NATL1A)).